Here is a 442-residue protein sequence, read N- to C-terminus: C4-dicarboxylate transport protein (442 aa).

The next 8 membrane-spanning stretches (helical) occupy residues V10–G30, F40–I60, L77–I97, L149–L169, F185–F205, L221–A241, V288–L308, and A354–I374. The disordered stretch occupies residues P420 to A442.

It belongs to the dicarboxylate/amino acid:cation symporter (DAACS) (TC 2.A.23) family.

The protein localises to the cell membrane. Functionally, responsible for the transport of dicarboxylates such as succinate, fumarate, and malate across the membrane. In Deinococcus geothermalis (strain DSM 11300 / CIP 105573 / AG-3a), this protein is C4-dicarboxylate transport protein.